We begin with the raw amino-acid sequence, 639 residues long: Synaptotagmin-16 (639 aa).

Residues 95–119 (NSDLQDSVQTASPTLGQQAEDSSSV) are compositionally biased toward polar residues. The interval 95–191 (NSDLQDSVQT…SSESDEDVTK (97 aa)) is disordered. Pro residues predominate over residues 121–134 (PPWPSKIPGAPKPQ). The span at 142-151 (EEDHHSERQR) shows a compositional bias: basic and acidic residues. Positions 174 to 187 (GDDEEPSTSSESDE) are enriched in acidic residues. A C2 1 domain is found at 344–463 (KCGDLDVIFE…HPEGEMKVTL (120 aa)). Positions 470–496 (NLSSGESPLSPSVVSHSDSASSTQSLS) are disordered. The span at 476–496 (SPLSPSVVSHSDSASSTQSLS) shows a compositional bias: low complexity. The C2 2 domain occupies 499–634 (GVPELLVGLS…SKGQQTCRWH (136 aa)).

Belongs to the synaptotagmin family. In terms of assembly, homodimer. Can also form heterodimers. As to expression, highly expressed in heart and testis. Moderately expressed in kidney.

Its function is as follows. May be involved in the trafficking and exocytosis of secretory vesicles in non-neuronal tissues. Is Ca(2+)-independent. The chain is Synaptotagmin-16 (Syt16) from Mus musculus (Mouse).